We begin with the raw amino-acid sequence, 342 residues long: Anthranilate phosphoribosyltransferase (342 aa).

Residues G84, G87 to D88, T92, N94 to T97, K112 to S120, and S124 contribute to the 5-phospho-alpha-D-ribose 1-diphosphate site. G84 contributes to the anthranilate binding site. Mg(2+) is bound at residue S96. N115 is an anthranilate binding site. An anthranilate-binding site is contributed by R170. The Mg(2+) site is built by D229 and E230.

The protein belongs to the anthranilate phosphoribosyltransferase family. Homodimer. Mg(2+) is required as a cofactor.

It catalyses the reaction N-(5-phospho-beta-D-ribosyl)anthranilate + diphosphate = 5-phospho-alpha-D-ribose 1-diphosphate + anthranilate. It participates in amino-acid biosynthesis; L-tryptophan biosynthesis; L-tryptophan from chorismate: step 2/5. Functionally, catalyzes the transfer of the phosphoribosyl group of 5-phosphorylribose-1-pyrophosphate (PRPP) to anthranilate to yield N-(5'-phosphoribosyl)-anthranilate (PRA). The polypeptide is Anthranilate phosphoribosyltransferase (Cupriavidus metallidurans (strain ATCC 43123 / DSM 2839 / NBRC 102507 / CH34) (Ralstonia metallidurans)).